The chain runs to 61 residues: Large ribosomal subunit protein uL30 (61 aa).

Belongs to the universal ribosomal protein uL30 family. In terms of assembly, part of the 50S ribosomal subunit.

This chain is Large ribosomal subunit protein uL30, found in Lactobacillus acidophilus (strain ATCC 700396 / NCK56 / N2 / NCFM).